We begin with the raw amino-acid sequence, 131 residues long: uncharacterized protein (131 aa).

2 consecutive transmembrane segments (helical) span residues 68–88 and 94–114; these read VVRATPIIGPYAGLPVIVAPI and VLGAIGVVDITAGIFEDIVAI.

Its subcellular location is the cell membrane. This is an uncharacterized protein from Methanocaldococcus jannaschii (strain ATCC 43067 / DSM 2661 / JAL-1 / JCM 10045 / NBRC 100440) (Methanococcus jannaschii).